The primary structure comprises 621 residues: Glutamyl-tRNA(Gln) amidotransferase subunit B, mitochondrial (621 aa).

Residues 1–41 (MARLPTTELRKYLLTGQFTRRGCLHLRPSPLAPPIPPLRTL) constitute a mitochondrion transit peptide. Disordered regions lie at residues 26–86 (LRPS…DNQT) and 106–136 (SKLF…APFD). Low complexity-rich tracts occupy residues 38-57 (LRTL…QIIP) and 110-120 (SPASTPSSSSD).

It belongs to the GatB/GatE family. GatB subfamily. Subunit of the heterotrimeric GatCAB amidotransferase (AdT) complex, composed of A, B and C subunits.

It localises to the mitochondrion. It catalyses the reaction L-glutamyl-tRNA(Gln) + L-glutamine + ATP + H2O = L-glutaminyl-tRNA(Gln) + L-glutamate + ADP + phosphate + H(+). Functionally, allows the formation of correctly charged Gln-tRNA(Gln) through the transamidation of misacylated Glu-tRNA(Gln) in the mitochondria. The reaction takes place in the presence of glutamine and ATP through an activated gamma-phospho-Glu-tRNA(Gln). The chain is Glutamyl-tRNA(Gln) amidotransferase subunit B, mitochondrial from Podospora anserina (strain S / ATCC MYA-4624 / DSM 980 / FGSC 10383) (Pleurage anserina).